Here is a 685-residue protein sequence, read N- to C-terminus: Glycine--tRNA ligase beta subunit (685 aa).

Belongs to the class-II aminoacyl-tRNA synthetase family. As to quaternary structure, tetramer of two alpha and two beta subunits.

It is found in the cytoplasm. It catalyses the reaction tRNA(Gly) + glycine + ATP = glycyl-tRNA(Gly) + AMP + diphosphate. The protein is Glycine--tRNA ligase beta subunit of Azotobacter vinelandii (strain DJ / ATCC BAA-1303).